The following is a 177-amino-acid chain: Arginine metabolism regulation protein I (177 aa).

A compositionally biased stretch (polar residues) spans 1–12; the sequence is MTSNSDGSSTSP. 2 disordered regions span residues 1 to 82 and 157 to 177; these read MTSN…TRRK and NASD…SPAN. Acidic residues predominate over residues 40-53; it reads QDQEGDFDEEDDDD. Residues 56-67 show a composition bias toward low complexity; that stretch reads SVSTSTPTPTIT. Positions 80 to 134 constitute an MADS-box domain; that stretch reads RRKQPIRYIENKTRRHVTFSKRRHGIMKKAYELSVLTGANILLLILANSGLVYTF. Polar residues predominate over residues 158-177; it reads ASDTPDATDTSPAQEQSPAN.

As to quaternary structure, interacts with ARG81 and ARG82.

It is found in the nucleus. Its function is as follows. With ARG81, ARG82 and MCM1, coordinates the expression of arginine anabolic and catabolic genes in response to arginine. The protein is Arginine metabolism regulation protein I (ARG80) of Saccharomyces cerevisiae (strain ATCC 204508 / S288c) (Baker's yeast).